The chain runs to 283 residues: Pantothenate synthetase (283 aa).

30–37 contributes to the ATP binding site; that stretch reads MGNLHDGH. His-37 acts as the Proton donor in catalysis. Gln-61 is a binding site for (R)-pantoate. Gln-61 provides a ligand contact to beta-alanine. 149-152 contacts ATP; the sequence is GEKD. Residue Gln-155 coordinates (R)-pantoate. Position 186–189 (186–189) interacts with ATP; sequence LSSR.

It belongs to the pantothenate synthetase family. As to quaternary structure, homodimer.

It localises to the cytoplasm. The catalysed reaction is (R)-pantoate + beta-alanine + ATP = (R)-pantothenate + AMP + diphosphate + H(+). It participates in cofactor biosynthesis; (R)-pantothenate biosynthesis; (R)-pantothenate from (R)-pantoate and beta-alanine: step 1/1. Functionally, catalyzes the condensation of pantoate with beta-alanine in an ATP-dependent reaction via a pantoyl-adenylate intermediate. This Escherichia coli O157:H7 protein is Pantothenate synthetase.